We begin with the raw amino-acid sequence, 115 residues long: Large ribosomal subunit protein bL19 (115 aa).

The protein belongs to the bacterial ribosomal protein bL19 family.

Its function is as follows. This protein is located at the 30S-50S ribosomal subunit interface and may play a role in the structure and function of the aminoacyl-tRNA binding site. The sequence is that of Large ribosomal subunit protein bL19 from Thermosipho africanus (strain TCF52B).